We begin with the raw amino-acid sequence, 339 residues long: NADH-quinone oxidoreductase subunit H (339 aa).

9 helical membrane-spanning segments follow: residues 10–30 (FPLTVIALKVVAITIPLILCV), 50–70 (PNVVGPFGLLQPIADAVKLLF), 82–102 (ILFILAPIITFVLSLIGWAVI), 115–135 (VGVLYILAISSLSVYGIIIAG), 155–175 (ISYEVSIGLVIVTVLLTTGTL), 187–207 (LPWWIDLMLLPMSIVFFISVL), 235–255 (MGFALFFLGEYANMILVSAMT), 275–295 (IPGFFWFVLKVMLLLFCFLWI), and 311–331 (GWKVFLPLTLFGVVLVSSVLF).

The protein belongs to the complex I subunit 1 family. In terms of assembly, NDH-1 is composed of 14 different subunits. Subunits NuoA, H, J, K, L, M, N constitute the membrane sector of the complex.

The protein localises to the cell inner membrane. It catalyses the reaction a quinone + NADH + 5 H(+)(in) = a quinol + NAD(+) + 4 H(+)(out). Functionally, NDH-1 shuttles electrons from NADH, via FMN and iron-sulfur (Fe-S) centers, to quinones in the respiratory chain. The immediate electron acceptor for the enzyme in this species is believed to be ubiquinone. Couples the redox reaction to proton translocation (for every two electrons transferred, four hydrogen ions are translocated across the cytoplasmic membrane), and thus conserves the redox energy in a proton gradient. This subunit may bind ubiquinone. The protein is NADH-quinone oxidoreductase subunit H of Rickettsia typhi (strain ATCC VR-144 / Wilmington).